The following is a 139-amino-acid chain: Large ribosomal subunit protein uL16 (139 aa).

Basic residues predominate over residues 1 to 20 (MLIPRRVKHRKQHHPKRRGM). Residues 1–22 (MLIPRRVKHRKQHHPKRRGMAK) form a disordered region.

This sequence belongs to the universal ribosomal protein uL16 family. As to quaternary structure, part of the 50S ribosomal subunit.

Functionally, binds 23S rRNA and is also seen to make contacts with the A and possibly P site tRNAs. The protein is Large ribosomal subunit protein uL16 of Streptomyces coelicolor (strain ATCC BAA-471 / A3(2) / M145).